A 443-amino-acid chain; its full sequence is Ribulose bisphosphate carboxylase large chain (443 aa).

N6,N6,N6-trimethyllysine is present on lysine 7. Substrate is bound by residues asparagine 116 and threonine 166. Lysine 168 functions as the Proton acceptor in the catalytic mechanism. Lysine 170 provides a ligand contact to substrate. Mg(2+) contacts are provided by lysine 194, aspartate 196, and glutamate 197. N6-carboxylysine is present on lysine 194. Histidine 287 functions as the Proton acceptor in the catalytic mechanism. 3 residues coordinate substrate: arginine 288, histidine 320, and serine 372.

It belongs to the RuBisCO large chain family. Type I subfamily. Heterohexadecamer of 8 large chains and 8 small chains; disulfide-linked. The disulfide link is formed within the large subunit homodimers. It depends on Mg(2+) as a cofactor. The disulfide bond which can form in the large chain dimeric partners within the hexadecamer appears to be associated with oxidative stress and protein turnover.

The protein localises to the plastid. It is found in the chloroplast. It carries out the reaction 2 (2R)-3-phosphoglycerate + 2 H(+) = D-ribulose 1,5-bisphosphate + CO2 + H2O. The catalysed reaction is D-ribulose 1,5-bisphosphate + O2 = 2-phosphoglycolate + (2R)-3-phosphoglycerate + 2 H(+). Its function is as follows. RuBisCO catalyzes two reactions: the carboxylation of D-ribulose 1,5-bisphosphate, the primary event in carbon dioxide fixation, as well as the oxidative fragmentation of the pentose substrate in the photorespiration process. Both reactions occur simultaneously and in competition at the same active site. The sequence is that of Ribulose bisphosphate carboxylase large chain from Abies homolepis (Nikko fir).